The sequence spans 620 residues: Cell fusion protein cfr1 (620 aa).

Residues leucine 79–methionine 169 enclose the Fibronectin type-III domain. In terms of domain architecture, BRCT spans leucine 167–isoleucine 256. 2 disordered regions span residues glutamine 287–alanine 566 and lysine 588–aspartate 620. Over residues alanine 303 to asparagine 314 the composition is skewed to polar residues. Over residues serine 315–alanine 330 the composition is skewed to low complexity. Positions serine 352 to glutamine 375 are enriched in polar residues. Over residues methionine 382–asparagine 392 the composition is skewed to basic and acidic residues. Positions leucine 393 to glutamate 406 are enriched in polar residues. Low complexity predominate over residues asparagine 424–threonine 434. A compositionally biased stretch (polar residues) spans asparagine 445–valine 468. Residues alanine 472–glutamate 484 show a composition bias toward acidic residues. Residues asparagine 506–glycine 515 are compositionally biased toward polar residues. Basic and acidic residues predominate over residues threonine 517 to proline 537.

This sequence belongs to the CHS5 family.

The protein localises to the golgi apparatus. Its function is as follows. Required for cell fusion, independently of fus1. Appears to have a role in transporting proteins that are involved in mating. May act as a scaffold to retain cell fusion proteins in the cisternae of the Golgi. Degraded at the onset of mating and this leads to release of cell fusion proteins. This chain is Cell fusion protein cfr1 (cfr1), found in Schizosaccharomyces pombe (strain 972 / ATCC 24843) (Fission yeast).